A 1849-amino-acid polypeptide reads, in one-letter code: Breast cancer type 1 susceptibility protein homolog (1849 aa).

Met1 bears the N-acetylmethionine mark. The segment at 24–65 (CPICLELIKEPVSTKCDHIFCKFCMLKLLNQKKGPSQCPLCK) adopts an RING-type zinc-finger fold. Phosphoserine is present on Ser114. Glycyl lysine isopeptide (Lys-Gly) (interchain with G-Cter in SUMO2) cross-links involve residues Lys301 and Lys339. Ser395, Ser398, Ser423, and Ser434 each carry phosphoserine. Glycyl lysine isopeptide (Lys-Gly) (interchain with G-Cter in SUMO2) cross-links involve residues Lys457 and Lys517. The span at 530 to 542 (KMTEGTDQTEQKC) shows a compositional bias: basic and acidic residues. Disordered stretches follow at residues 530–558 (KMTEGTDQTEQKCHGMNITSDGHENKTKR) and 620–662 (ELEL…RQSQ). Phosphoserine occurs at positions 691, 711, and 720. Positions 882 to 912 (SGSLRDQSPRDPLKCRQKEDSQGKSESKSQH) are disordered. Over residues 888–910 (QSPRDPLKCRQKEDSQGKSESKS) the composition is skewed to basic and acidic residues. Lys981 participates in a covalent cross-link: Glycyl lysine isopeptide (Lys-Gly) (interchain with G-Cter in SUMO2). At Ser982 the chain carries Phosphoserine; by CHEK2. A Phosphoserine modification is found at Ser1002. A compositionally biased stretch (low complexity) spans 1036 to 1061 (NSVNEVGSSTNEVGSSVNEVGSSGEN). The tract at residues 1036-1070 (NSVNEVGSSTNEVGSSVNEVGSSGENIQAEPGRNR) is disordered. A Glycyl lysine isopeptide (Lys-Gly) (interchain with G-Cter in SUMO2) cross-link involves residue Lys1073. Residues Ser1138, Ser1184, Ser1211, Ser1212, Ser1274, Ser1323, Ser1330, Ser1336, and Ser1382 each carry the phosphoserine modification. The disordered stretch occupies residues 1172–1211 (FSESVQKGEFRGSPGPFTHTHLAQGHQRGAGKLESEETVS). Disordered regions lie at residues 1321-1389 (YQSE…ILTT), 1412-1433 (VLERHGSQPSHSSASLTADSRG), and 1452-1493 (SEKS…RSSA). The segment covering 1336-1360 (SDDEERETGLEEDSCQEEQSVDSDL) has biased composition (acidic residues). Composition is skewed to polar residues over residues 1370 to 1389 (ETSLSEDGVGLSSQSDILTT) and 1418 to 1429 (SQPSHSSASLTA). Thr1389 bears the Phosphothreonine mark. The interaction with PALB2 stretch occupies residues 1392 to 1419 (RDTMQDNLLKLQQEMAELEAVLERHGSQ). Residues Ser1418, Ser1452, and Ser1518 each carry the phosphoserine modification. Disordered stretches follow at residues 1562-1590 (SLFSHEPESDPSEDRAAEPAHVHSMPPSA) and 1621-1640 (REESMSKEKPEVISSTERSK). 2 stretches are compositionally biased toward basic and acidic residues: residues 1566-1582 (HEPESDPSEDRAAEPAH) and 1621-1631 (REESMSKEKPE). BRCT domains are found at residues 1642 to 1729 (RLSM…DFEV) and 1749 to 1848 (RDKK…TYLV).

Heterodimer with BARD1. Part of the BRCA1-associated genome surveillance complex (BASC), which contains BRCA1, MSH2, MSH6, MLH1, ATM, BLM, PMS2 and the MRE11-RAD50-NBN protein (MRN) complex. This association could be a dynamic process changing throughout the cell cycle and within subnuclear domains. Component of the BRCA1-A complex, at least composed of BRCA1, BARD1, UIMC1/RAP80, ABRAXAS1, BRCC3/BRCC36, BABAM2 and BABAM1/NBA1. Interacts (via the BRCT domains) with ABRAXAS1 (phosphorylated form); this is important for recruitment to sites of DNA damage. Can form a heterotetramer with two molecules of ABRAXAS1 (phosphorylated form). Component of the BRCA1-RBBP8 complex. Interacts (via the BRCT domains) with RBBP8 ('Ser-327' phosphorylated form); the interaction ubiquitinates RBBP8, regulates CHEK1 activation, and involves RBBP8 in BRCA1-dependent G2/M checkpoint control on DNA damage. Associates with RNA polymerase II holoenzyme. Interacts with SMC1A, NELFB, DCLRE1C, CLSPN. CHEK1, CHEK2, BAP1, BRCC3, UBXN1 and PCLAF. Interacts (via BRCT domains) with BRIP1 (phosphorylated form). Interacts with FANCD2 (ubiquitinated form). Interacts with H2AX (phosphorylated on 'Ser-140'). Interacts (via the BRCT domains) with ACACA (phosphorylated form); the interaction prevents dephosphorylation of ACACA. Part of a BRCA complex containing BRCA1, BRCA2 and PALB2. Interacts directly with PALB2; the interaction is essential for its function in HRR. Interacts directly with BRCA2; the interaction occurs only in the presence of PALB2 which serves as the bridging protein. Interacts (via the BRCT domains) with LMO4; the interaction represses the transcriptional activity of BRCA1. Interacts (via the BRCT domains) with CCAR2 (via N-terminus); the interaction represses the transcriptional activator activity of BRCA1. Interacts with EXD2. Interacts (via C-terminus) with DHX9; this interaction is direct and links BRCA1 to the RNA polymerase II holoenzyme. Interacts with DNA helicase ZGRF1; the interaction is increased following DNA damage induction. Phosphorylated in response to IR, UV, and various stimuli that cause checkpoint activation, probably by ATM or ATR. Phosphorylation at Ser-982 by CHEK2 regulates mitotic spindle assembly. Phosphorylation by AURKA regulates centrosomal microtubule nucleation. Post-translationally, autoubiquitinated, undergoes 'Lys-6'-linked polyubiquitination. 'Lys-6'-linked polyubiquitination does not promote degradation.

It localises to the nucleus. Its subcellular location is the chromosome. It is found in the cytoplasm. The enzyme catalyses S-ubiquitinyl-[E2 ubiquitin-conjugating enzyme]-L-cysteine + [acceptor protein]-L-lysine = [E2 ubiquitin-conjugating enzyme]-L-cysteine + N(6)-ubiquitinyl-[acceptor protein]-L-lysine.. The protein operates within protein modification; protein ubiquitination. E3 ubiquitin-protein ligase that specifically mediates the formation of 'Lys-6'-linked polyubiquitin chains and plays a central role in DNA repair by facilitating cellular responses to DNA damage. It is unclear whether it also mediates the formation of other types of polyubiquitin chains. The BRCA1-BARD1 heterodimer coordinates a diverse range of cellular pathways such as DNA damage repair, ubiquitination and transcriptional regulation to maintain genomic stability. Regulates centrosomal microtubule nucleation. Required for appropriate cell cycle arrests after ionizing irradiation in both the S-phase and the G2 phase of the cell cycle. Required for FANCD2 targeting to sites of DNA damage. Inhibits lipid synthesis by binding to inactive phosphorylated ACACA and preventing its dephosphorylation. Contributes to homologous recombination repair (HRR) via its direct interaction with PALB2, fine-tunes recombinational repair partly through its modulatory role in the PALB2-dependent loading of BRCA2-RAD51 repair machinery at DNA breaks. Component of the BRCA1-RBBP8 complex which regulates CHEK1 activation and controls cell cycle G2/M checkpoints on DNA damage via BRCA1-mediated ubiquitination of RBBP8. Acts as a transcriptional activator. The chain is Breast cancer type 1 susceptibility protein homolog (BRCA1) from Bos taurus (Bovine).